Reading from the N-terminus, the 370-residue chain is DNA replication and repair protein RecF (370 aa).

Position 30 to 37 (30 to 37 (GENAQGKT)) interacts with ATP.

The protein belongs to the RecF family.

It is found in the cytoplasm. Its function is as follows. The RecF protein is involved in DNA metabolism; it is required for DNA replication and normal SOS inducibility. RecF binds preferentially to single-stranded, linear DNA. It also seems to bind ATP. The protein is DNA replication and repair protein RecF of Staphylococcus aureus (strain USA300).